A 111-amino-acid polypeptide reads, in one-letter code: UPF0145 protein Bphy_3680 (111 aa).

Belongs to the UPF0145 family.

This chain is UPF0145 protein Bphy_3680, found in Paraburkholderia phymatum (strain DSM 17167 / CIP 108236 / LMG 21445 / STM815) (Burkholderia phymatum).